The following is a 437-amino-acid chain: Methylenetetrahydrofolate--tRNA-(uracil-5-)-methyltransferase TrmFO (437 aa).

FAD is bound at residue 10-15 (GAGLAG).

The protein belongs to the MnmG family. TrmFO subfamily. FAD is required as a cofactor.

The protein localises to the cytoplasm. It catalyses the reaction uridine(54) in tRNA + (6R)-5,10-methylene-5,6,7,8-tetrahydrofolate + NADH + H(+) = 5-methyluridine(54) in tRNA + (6S)-5,6,7,8-tetrahydrofolate + NAD(+). It carries out the reaction uridine(54) in tRNA + (6R)-5,10-methylene-5,6,7,8-tetrahydrofolate + NADPH + H(+) = 5-methyluridine(54) in tRNA + (6S)-5,6,7,8-tetrahydrofolate + NADP(+). In terms of biological role, catalyzes the folate-dependent formation of 5-methyl-uridine at position 54 (M-5-U54) in all tRNAs. This is Methylenetetrahydrofolate--tRNA-(uracil-5-)-methyltransferase TrmFO from Pelotomaculum thermopropionicum (strain DSM 13744 / JCM 10971 / SI).